A 154-amino-acid polypeptide reads, in one-letter code: 3-hydroxyacyl-[acyl-carrier-protein] dehydratase FabZ (154 aa).

Histidine 58 is a catalytic residue.

Belongs to the thioester dehydratase family. FabZ subfamily.

Its subcellular location is the cytoplasm. It catalyses the reaction a (3R)-hydroxyacyl-[ACP] = a (2E)-enoyl-[ACP] + H2O. Involved in unsaturated fatty acids biosynthesis. Catalyzes the dehydration of short chain beta-hydroxyacyl-ACPs and long chain saturated and unsaturated beta-hydroxyacyl-ACPs. This Protochlamydia amoebophila (strain UWE25) protein is 3-hydroxyacyl-[acyl-carrier-protein] dehydratase FabZ.